A 337-amino-acid polypeptide reads, in one-letter code: Glucokinase (337 aa).

11–16 contributes to the ATP binding site; it reads ADIGGT.

The protein belongs to the bacterial glucokinase family.

It localises to the cytoplasm. It catalyses the reaction D-glucose + ATP = D-glucose 6-phosphate + ADP + H(+). This chain is Glucokinase, found in Xylella fastidiosa (strain M23).